The chain runs to 141 residues: Cystatin (141 aa).

Positions 1–26 (MVHFQLPVAAPLCLLCALLLLPSATM) are cleaved as a signal peptide. The Cystatin domain occupies 29–129 (GGLSPRSVSD…CHFQVWSRPW (101 aa)). Positions 73 to 77 (QVVAG) match the Secondary area of contact motif. Disulfide bonds link Cys91-Cys107 and Cys120-Cys140.

It belongs to the cystatin family. Expressed at a low level by the venom gland (at protein level).

The protein resides in the secreted. In terms of biological role, inhibits various C1 cysteine proteases including cathepsin L, papain and cathepsin B. This protein has no toxic activity and its function in the venom is unknown. It may play a role as a housekeeping or regulatory protein. The chain is Cystatin from Naja kaouthia (Monocled cobra).